We begin with the raw amino-acid sequence, 197 residues long: Guanylate kinase (197 aa).

One can recognise a Guanylate kinase-like domain in the interval 6 to 191 (SKLIILSGPS…CVAQIEKIIS (186 aa)). ATP is bound at residue 13 to 20 (GPSGVGKG).

This sequence belongs to the guanylate kinase family.

Its subcellular location is the cytoplasm. The catalysed reaction is GMP + ATP = GDP + ADP. Functionally, essential for recycling GMP and indirectly, cGMP. The protein is Guanylate kinase of Mesomycoplasma hyopneumoniae (strain 232) (Mycoplasma hyopneumoniae).